Consider the following 266-residue polypeptide: Large ribosomal subunit protein uL4 (266 aa).

Belongs to the universal ribosomal protein uL4 family. As to quaternary structure, part of the 50S ribosomal subunit.

One of the primary rRNA binding proteins, this protein initially binds near the 5'-end of the 23S rRNA. It is important during the early stages of 50S assembly. It makes multiple contacts with different domains of the 23S rRNA in the assembled 50S subunit and ribosome. In terms of biological role, forms part of the polypeptide exit tunnel. The chain is Large ribosomal subunit protein uL4 from Sulfurisphaera tokodaii (strain DSM 16993 / JCM 10545 / NBRC 100140 / 7) (Sulfolobus tokodaii).